The following is a 583-amino-acid chain: AP-1-like transcription factor YAP1 (583 aa).

Residues 1-86 (MSTSTAKRPF…KELEDKVSQL (86 aa)) form a disordered region. Residues 8 to 17 (RPFDNKRAGS) show a composition bias toward basic and acidic residues. Residues 24-36 (SDSGGNNSGSSPA) are compositionally biased toward low complexity. Over residues 37-46 (SKRRERKPGR) the composition is skewed to basic residues. The Bipartite nuclear localization signal motif lies at 41-48 (ERKPGRKP). 2 stretches are compositionally biased toward basic and acidic residues: residues 47 to 58 (KPLETEAKDKRT) and 67 to 84 (AFRERRERKMKELEDKVS). The 64-residue stretch at 51 to 114 (TEAKDKRTAQ…TNLLSELKRY (64 aa)) folds into the bZIP domain. The segment at 54 to 77 (KDKRTAQNRAAQRAFRERRERKMK) is basic motif. The interval 79–86 (LEDKVSQL) is leucine-zipper. A Bipartite nuclear localization signal motif is present at residues 120–127 (KKRDSILL). The span at 177-195 (SKIPSPSSDSTSPSASTSI) shows a compositional bias: low complexity. Positions 177 to 233 (SKIPSPSSDSTSPSASTSILDNANNKSVSSTNLNHSRSSISNSSSSPSNVNGLSSRK) are disordered. The span at 196–207 (LDNANNKSVSST) shows a compositional bias: polar residues. Low complexity predominate over residues 208–230 (NLNHSRSSISNSSSSPSNVNGLS). A n-CRD region spans residues 265-272 (CSKLSMAC). Disulfide bonds link Cys265-Cys531 and Cys272-Cys562. Disordered regions lie at residues 275–329 (KSNP…SASA) and 350–373 (QYNDSSHSQATPNGLDNDSSVSAW). Over residues 297 to 312 (KSNSNVNITNHNNNKI) the composition is skewed to low complexity. A compositionally biased stretch (polar residues) spans 316–329 (DLSSSAPLHDSASA). The tract at residues 531–562 (CSEVWDRITAHPRYSDLDIDGLCLELRTKAKC) is c-CRD. A Nuclear export signal motif is present at residues 547–554 (LDIDGLCL).

The protein belongs to the bZIP family. YAP subfamily. Post-translationally, oxidative stress induces conformational changes through oxidation of cysteine residues, masking the nuclear export signal, thus abolishing nuclear export by CRM1/exportin 1.

The protein resides in the nucleus. Its subcellular location is the cytoplasm. In terms of biological role, transcription activator involved in oxidative stress response and cadmium resistance. Regulates the transcription of genes encoding antioxidant enzymes and components of the cellular thiol-reducing pathways. Activity of the transcription factor is controlled through oxidation of specific cysteine residues resulting in the alteration of its subcellular location. Activation by alkyl hydroperoxides or cadmium induces nuclear accumulation and as a result YAP1 transcriptional activity. This is AP-1-like transcription factor YAP1 (YAP1) from Kluyveromyces lactis (strain ATCC 8585 / CBS 2359 / DSM 70799 / NBRC 1267 / NRRL Y-1140 / WM37) (Yeast).